The sequence spans 375 residues: Neuropeptide Y receptor type 4 (375 aa).

Over Met1 to Glu39 the chain is Extracellular. Residues Asn2, Asn19, and Asn29 are each glycosylated (N-linked (GlcNAc...) asparagine). Residues Leu40–Leu60 form a helical membrane-spanning segment. The Cytoplasmic segment spans residues Cys61–Leu78. Residues Leu79 to Val99 form a helical membrane-spanning segment. Residues Thr100–Met116 are Extracellular-facing. Cys114 and Cys201 are oxidised to a cystine. The helical transmembrane segment at Leu117–Leu137 threads the bilayer. Over Glu138 to Gln155 the chain is Cytoplasmic. A helical transmembrane segment spans residues Ala156–Ala176. Topologically, residues Asn177–Arg211 are extracellular. Asn187 carries an N-linked (GlcNAc...) asparagine glycan. The chain crosses the membrane as a helical span at residues Leu212–Val232. At Cys233 to Met266 the chain is on the cytoplasmic side. A helical membrane pass occupies residues Leu267–Leu287. Residues Glu288–Asn301 are Extracellular-facing. A helical membrane pass occupies residues Leu302 to Tyr322. At Gly323–Ile375 the chain is on the cytoplasmic side. A lipid anchor (S-palmitoyl cysteine) is attached at Cys340.

The protein belongs to the G-protein coupled receptor 1 family. As to expression, heart, detected in small intestine.

Its subcellular location is the cell membrane. In terms of biological role, g protein-coupled receptor for PPY/pancreatic polypeptide/PP that is negatively coupled to cAMP. Has much lower affinity for the NPY/neuropeptide Y and PYY/peptide YY. The protein is Neuropeptide Y receptor type 4 (Npy4r) of Mus musculus (Mouse).